A 382-amino-acid polypeptide reads, in one-letter code: Dual-specificity RNA methyltransferase RlmN (382 aa).

E96 (proton acceptor) is an active-site residue. The 239-residue stretch at 102 to 340 (QNGRGTLCVS…VTVRTTRGDD (239 aa)) folds into the Radical SAM core domain. C109 and C345 form a disulfide bridge. [4Fe-4S] cluster-binding residues include C116, C120, and C123. S-adenosyl-L-methionine-binding positions include 170–171 (GE), S202, 224–226 (SLH), and N302. C345 acts as the S-methylcysteine intermediate in catalysis.

The protein belongs to the radical SAM superfamily. RlmN family. The cofactor is [4Fe-4S] cluster.

Its subcellular location is the cytoplasm. The enzyme catalyses adenosine(2503) in 23S rRNA + 2 reduced [2Fe-2S]-[ferredoxin] + 2 S-adenosyl-L-methionine = 2-methyladenosine(2503) in 23S rRNA + 5'-deoxyadenosine + L-methionine + 2 oxidized [2Fe-2S]-[ferredoxin] + S-adenosyl-L-homocysteine. The catalysed reaction is adenosine(37) in tRNA + 2 reduced [2Fe-2S]-[ferredoxin] + 2 S-adenosyl-L-methionine = 2-methyladenosine(37) in tRNA + 5'-deoxyadenosine + L-methionine + 2 oxidized [2Fe-2S]-[ferredoxin] + S-adenosyl-L-homocysteine. Functionally, specifically methylates position 2 of adenine 2503 in 23S rRNA and position 2 of adenine 37 in tRNAs. m2A2503 modification seems to play a crucial role in the proofreading step occurring at the peptidyl transferase center and thus would serve to optimize ribosomal fidelity. This chain is Dual-specificity RNA methyltransferase RlmN, found in Ectopseudomonas mendocina (strain ymp) (Pseudomonas mendocina).